A 560-amino-acid chain; its full sequence is Membrane protein insertase YidC (560 aa).

6 consecutive transmembrane segments (helical) span residues 5-25, 334-354, 357-377, 431-451, 476-496, and 522-542; these read IINL…WQYF, AIDF…MNFF, YVGN…LLMF, LPIL…YVTI, LFGL…WPIL, and FMPL…LIYW.

Belongs to the OXA1/ALB3/YidC family. Type 1 subfamily. As to quaternary structure, interacts with the Sec translocase complex via SecD. Specifically interacts with transmembrane segments of nascent integral membrane proteins during membrane integration.

Its subcellular location is the cell inner membrane. In terms of biological role, required for the insertion and/or proper folding and/or complex formation of integral membrane proteins into the membrane. Involved in integration of membrane proteins that insert both dependently and independently of the Sec translocase complex, as well as at least some lipoproteins. Aids folding of multispanning membrane proteins. This Rickettsia akari (strain Hartford) protein is Membrane protein insertase YidC.